The sequence spans 518 residues: Putative succinate-semialdehyde dehydrogenase [NADP(+)] 2 (518 aa).

Residues 157–158 (WN), 181–184 (KPDS), and 232–233 (GS) contribute to the NADP(+) site. Glutamate 254 functions as the Proton acceptor in the catalytic mechanism. Leucine 255 provides a ligand contact to NADP(+). Cysteine 288 serves as the catalytic Nucleophile. Glutamate 386 serves as a coordination point for NADP(+).

It belongs to the aldehyde dehydrogenase family.

It carries out the reaction succinate semialdehyde + NADP(+) + H2O = succinate + NADPH + 2 H(+). Its function is as follows. Catalyzes the NADP(+)-dependent oxidation of succinate semialdehyde to succinate. Although it has succinate semialdehyde dehydrogenase activity, is likely to act physiologically on a different aldehyde(s). The chain is Putative succinate-semialdehyde dehydrogenase [NADP(+)] 2 (gabD2) from Mycobacterium bovis (strain ATCC BAA-935 / AF2122/97).